A 149-amino-acid polypeptide reads, in one-letter code: Nucleoside diphosphate kinase 1 (149 aa).

Lys-9, Phe-57, Arg-85, Thr-91, Arg-102, and Asn-112 together coordinate ATP. The Pros-phosphohistidine intermediate role is filled by His-115.

Homohexamer. It depends on Mg(2+) as a cofactor.

It catalyses the reaction a 2'-deoxyribonucleoside 5'-diphosphate + ATP = a 2'-deoxyribonucleoside 5'-triphosphate + ADP. The enzyme catalyses a ribonucleoside 5'-diphosphate + ATP = a ribonucleoside 5'-triphosphate + ADP. Functionally, major role in the synthesis of nucleoside triphosphates other than ATP. The ATP gamma phosphate is transferred to the NDP beta phosphate via a ping-pong mechanism, using a phosphorylated active-site intermediate. This NDK is microtubule-associated. This Oryza sativa subsp. indica (Rice) protein is Nucleoside diphosphate kinase 1 (NDKR).